Reading from the N-terminus, the 186-residue chain is Putative manganese efflux pump MntP (186 aa).

6 helical membrane passes run 1-21 (MSFL…FAVS), 41-61 (VFFG…GSAV), 71-91 (WIAF…ALYG), 105-125 (LLML…SFAF), 130-150 (ILEP…CGAV), and 165-185 (IIGG…HLLW).

The protein belongs to the MntP (TC 9.B.29) family.

The protein localises to the cell membrane. In terms of biological role, probably functions as a manganese efflux pump. The chain is Putative manganese efflux pump MntP from Methanosarcina barkeri (strain Fusaro / DSM 804).